The following is a 60-amino-acid chain: Light-harvesting polypeptide B-885 alpha-2 chain (60 aa).

Topologically, residues 1–16 are cytoplasmic; it reads SAPAQWKLWLVMDPRT. Residues 17-37 form a helical membrane-spanning segment; sequence VMIGTAAWLGVLALLIHFLLL. An a bacteriochlorophyll-binding site is contributed by His33. Residues 38–60 are Periplasmic-facing; it reads GTERFNWIDTGLKEQKATAAAQA.

Belongs to the antenna complex alpha subunit family. The core complex is formed by different alpha and beta chains, binding bacteriochlorophyll molecules, and arranged most probably in tetrameric structures disposed around the reaction center. The non-pigmented gamma chains may constitute additional components.

The protein resides in the cell inner membrane. Antenna complexes are light-harvesting systems, which transfer the excitation energy to the reaction centers. In Rhodocyclus tenuis (Rhodospirillum tenue), this protein is Light-harvesting polypeptide B-885 alpha-2 chain.